Consider the following 544-residue polypeptide: Membrane protein insertase YidC (544 aa).

Positions 29 to 58 are disordered; sequence TPKADPSATTQTLNPTSSESEDYVPTSSDS. The span at 35–46 shows a compositional bias: polar residues; that stretch reads SATTQTLNPTSS. A run of 3 helical transmembrane segments spans residues 341–361, 421–441, and 499–519; these read FVLL…IIAI, GGCF…YVFL, and PVIF…YWLV.

This sequence belongs to the OXA1/ALB3/YidC family. Type 1 subfamily. In terms of assembly, interacts with the Sec translocase complex via SecD. Specifically interacts with transmembrane segments of nascent integral membrane proteins during membrane integration.

It is found in the cell inner membrane. In terms of biological role, required for the insertion and/or proper folding and/or complex formation of integral membrane proteins into the membrane. Involved in integration of membrane proteins that insert both dependently and independently of the Sec translocase complex, as well as at least some lipoproteins. Aids folding of multispanning membrane proteins. The polypeptide is Membrane protein insertase YidC (Pseudoalteromonas translucida (strain TAC 125)).